An 895-amino-acid polypeptide reads, in one-letter code: Protein translocase subunit SecA (895 aa).

ATP is bound by residues Gln-89, 107 to 111 (GEGKT), and Asp-502. 2 disordered regions span residues 560-579 (RRID…PGRT) and 848-884 (AAPA…CGSG). 4 residues coordinate Zn(2+): Cys-879, Cys-881, Cys-890, and His-891.

It belongs to the SecA family. Monomer and homodimer. Part of the essential Sec protein translocation apparatus which comprises SecA, SecYEG and auxiliary proteins SecDF-YajC and YidC. Zn(2+) serves as cofactor.

It is found in the cell inner membrane. It localises to the cytoplasm. It carries out the reaction ATP + H2O + cellular proteinSide 1 = ADP + phosphate + cellular proteinSide 2.. In terms of biological role, part of the Sec protein translocase complex. Interacts with the SecYEG preprotein conducting channel. Has a central role in coupling the hydrolysis of ATP to the transfer of proteins into and across the cell membrane, serving both as a receptor for the preprotein-SecB complex and as an ATP-driven molecular motor driving the stepwise translocation of polypeptide chains across the membrane. In Ruegeria sp. (strain TM1040) (Silicibacter sp.), this protein is Protein translocase subunit SecA.